The chain runs to 236 residues: UPF0502 protein Bxeno_B1639 (236 aa).

This sequence belongs to the UPF0502 family.

The protein is UPF0502 protein Bxeno_B1639 of Paraburkholderia xenovorans (strain LB400).